The sequence spans 169 residues: Cell division inhibitor SulA (169 aa).

Positions 106-112 (ALRTGNY) are ftsZ binding. Positions 162 to 169 (KIHSNLYH) are lon protease binding.

It belongs to the SulA family. In terms of assembly, interacts with FtsZ. In terms of processing, is rapidly cleaved and degraded by the Lon protease once DNA damage is repaired.

Functionally, component of the SOS system and an inhibitor of cell division. Accumulation of SulA causes rapid cessation of cell division and the appearance of long, non-septate filaments. In the presence of GTP, binds a polymerization-competent form of FtsZ in a 1:1 ratio, thus inhibiting FtsZ polymerization and therefore preventing it from participating in the assembly of the Z ring. This mechanism prevents the premature segregation of damaged DNA to daughter cells during cell division. The protein is Cell division inhibitor SulA of Escherichia fergusonii (strain ATCC 35469 / DSM 13698 / CCUG 18766 / IAM 14443 / JCM 21226 / LMG 7866 / NBRC 102419 / NCTC 12128 / CDC 0568-73).